Here is a 567-residue protein sequence, read N- to C-terminus: Proline--tRNA ligase (567 aa).

This sequence belongs to the class-II aminoacyl-tRNA synthetase family. ProS type 1 subfamily. As to quaternary structure, homodimer.

It localises to the cytoplasm. The catalysed reaction is tRNA(Pro) + L-proline + ATP = L-prolyl-tRNA(Pro) + AMP + diphosphate. In terms of biological role, catalyzes the attachment of proline to tRNA(Pro) in a two-step reaction: proline is first activated by ATP to form Pro-AMP and then transferred to the acceptor end of tRNA(Pro). As ProRS can inadvertently accommodate and process non-cognate amino acids such as alanine and cysteine, to avoid such errors it has two additional distinct editing activities against alanine. One activity is designated as 'pretransfer' editing and involves the tRNA(Pro)-independent hydrolysis of activated Ala-AMP. The other activity is designated 'posttransfer' editing and involves deacylation of mischarged Ala-tRNA(Pro). The misacylated Cys-tRNA(Pro) is not edited by ProRS. The protein is Proline--tRNA ligase of Streptomyces griseus subsp. griseus (strain JCM 4626 / CBS 651.72 / NBRC 13350 / KCC S-0626 / ISP 5235).